A 230-amino-acid chain; its full sequence is MREERPIIALDFPSFEEVKSFLSLFPADERLYVKIGMELYYAEGPDIVRYIKSLGHSVFLDLKLHDIPNTVRSTMAVLSRLGIDMTTVQAAGGVEMLRAAREGLGQGPILIAVTQLTSTSEEQMREDQNIQSTLIASVLHYAKRTAQAKLDGVVCSAHEVKVIKAEVPVGFVCLTPGIRPTGADIGDQKRVMTPHQARAIGSDYIVLGRPITRAADPVKAYHQIKAEWNR.

Residues D11, K34, 61-70, T117, R179, Q188, G208, and R209 each bind substrate; that span reads DLKLHDIPNT. Residue K63 is the Proton donor of the active site.

Belongs to the OMP decarboxylase family. Type 1 subfamily. In terms of assembly, homodimer.

It catalyses the reaction orotidine 5'-phosphate + H(+) = UMP + CO2. It functions in the pathway pyrimidine metabolism; UMP biosynthesis via de novo pathway; UMP from orotate: step 2/2. In terms of biological role, catalyzes the decarboxylation of orotidine 5'-monophosphate (OMP) to uridine 5'-monophosphate (UMP). The polypeptide is Orotidine 5'-phosphate decarboxylase (Streptococcus equi subsp. zooepidemicus (strain H70)).